A 340-amino-acid chain; its full sequence is Citramalyl-CoA lyase, mitochondrial (340 aa).

The N-terminal 22 residues, 1 to 22 (MALRLLRRAARGAAAAALLRLK), are a transit peptide targeting the mitochondrion. Substrate-binding residues include Y50, K57, and K61. N6-acetyllysine occurs at positions 57 and 61. Residues K82 and K92 each carry the N6-acetyllysine; alternate modification. K82 and K92 each carry N6-succinyllysine; alternate. R107 is a substrate binding site. 2 residues coordinate Mg(2+): E171 and D206. 272 to 273 (IH) provides a ligand contact to substrate. N6-succinyllysine is present on K309. The active site involves D320.

Belongs to the HpcH/HpaI aldolase family. Citrate lyase beta subunit-like subfamily. In terms of assembly, homotrimer. Requires Mg(2+) as cofactor.

It is found in the mitochondrion. The catalysed reaction is glyoxylate + acetyl-CoA + H2O = (S)-malate + CoA + H(+). It catalyses the reaction propanoyl-CoA + glyoxylate + H2O = 3-methylmalate + CoA + H(+). The enzyme catalyses (3S)-citramalyl-CoA = pyruvate + acetyl-CoA. It carries out the reaction (S)-malyl-CoA + H2O = (S)-malate + CoA + H(+). Mitochondrial citramalyl-CoA lyase indirectly involved in the vitamin B12 metabolism. Converts citramalyl-CoA into acetyl-CoA and pyruvate in the C5-dicarboxylate catabolism pathway. The C5-dicarboxylate catabolism pathway is required to detoxify itaconate, a vitamin B12-poisoning metabolite. Also acts as a malate synthase in vitro, converting glyoxylate and acetyl-CoA to malate. Also displays malyl-CoA thioesterase activity. Also acts as a beta-methylmalate synthase in vitro, by mediating conversion of glyoxylate and propionyl-CoA to beta-methylmalate. Also has very weak citramalate synthase activity in vitro. The protein is Citramalyl-CoA lyase, mitochondrial of Homo sapiens (Human).